Consider the following 335-residue polypeptide: Anthranilate phosphoribosyltransferase (335 aa).

Residues glycine 79, 82-83, serine 87, 89-92, 107-115, and serine 119 contribute to the 5-phospho-alpha-D-ribose 1-diphosphate site; these read GD, NIST, and KHGNRSITS. Glycine 79 is a binding site for anthranilate. Serine 91 is a binding site for Mg(2+). An anthranilate-binding site is contributed by asparagine 110. An anthranilate-binding site is contributed by arginine 165. Positions 224 and 225 each coordinate Mg(2+).

It belongs to the anthranilate phosphoribosyltransferase family. Homodimer. The cofactor is Mg(2+).

The catalysed reaction is N-(5-phospho-beta-D-ribosyl)anthranilate + diphosphate = 5-phospho-alpha-D-ribose 1-diphosphate + anthranilate. The protein operates within amino-acid biosynthesis; L-tryptophan biosynthesis; L-tryptophan from chorismate: step 2/5. In terms of biological role, catalyzes the transfer of the phosphoribosyl group of 5-phosphorylribose-1-pyrophosphate (PRPP) to anthranilate to yield N-(5'-phosphoribosyl)-anthranilate (PRA). The polypeptide is Anthranilate phosphoribosyltransferase (Lactococcus lactis subsp. lactis (strain IL1403) (Streptococcus lactis)).